Reading from the N-terminus, the 445-residue chain is GRAM domain-containing protein 2B (445 aa).

Methionine 1 carries the post-translational modification N-acetylmethionine. A disordered region spans residues methionine 1–glutamine 118. Composition is skewed to polar residues over residues proline 18 to alanine 44 and lysine 56 to glutamate 68. Low complexity predominate over residues serine 82 to serine 93. The segment covering aspartate 94–lysine 112 has biased composition (basic and acidic residues). The GRAM domain occupies methionine 123–lysine 190. The segment covering threonine 233–asparagine 246 has biased composition (polar residues). A disordered region spans residues threonine 233–arginine 252. Serine 238, serine 255, and serine 265 each carry phosphoserine. A disordered region spans residues aspartate 277–lysine 331. Residues tyrosine 281–serine 291 show a composition bias toward polar residues. A compositionally biased stretch (basic and acidic residues) spans glycine 311–alanine 330.

The sequence is that of GRAM domain-containing protein 2B (Gramd2b) from Mus musculus (Mouse).